Reading from the N-terminus, the 220-residue chain is Riboflavin kinase (220 aa).

Positions 1–92 are H-T-H motif-like; the sequence is MDTSDQYYRA…LSRILSIKSN (92 aa). Residues 93-220 are riboflavin kinase; sequence IVMTGIVVPG…GDEVTIEVTA (128 aa). 102–107 contributes to the CDP binding site; it reads GMGEGK. Mg(2+)-binding residues include T131 and N133. FMN contacts are provided by T188 and E195. 200–203 lines the CDP pocket; it reads KYLR.

The protein belongs to the archaeal riboflavin kinase family. Mg(2+) serves as cofactor.

The enzyme catalyses riboflavin + CTP = CDP + FMN + H(+). Its pathway is cofactor biosynthesis; FMN biosynthesis; FMN from riboflavin (CTP route): step 1/1. Functionally, catalyzes the CTP-dependent phosphorylation of riboflavin (vitamin B2) to form flavin mononucleotide (FMN). This Thermoplasma volcanium (strain ATCC 51530 / DSM 4299 / JCM 9571 / NBRC 15438 / GSS1) protein is Riboflavin kinase (ribK).